The chain runs to 737 residues: Catalase-peroxidase (737 aa).

The tract at residues 1-29 is disordered; it reads MTDSPDATTGGCPVAHGDRLPHPTQGGAN. Residues 101–227 constitute a cross-link (tryptophyl-tyrosyl-methioninium (Trp-Tyr) (with M-253)); sequence WHSAGTYRVS…LGATHMGLIY (127 aa). Residue His102 is the Proton acceptor of the active site. Positions 227-253 form a cross-link, tryptophyl-tyrosyl-methioninium (Tyr-Met) (with W-101); the sequence is YVNPEGPEGKPDPVAAARDIRETFGRM. His268 is a binding site for heme b.

Belongs to the peroxidase family. Peroxidase/catalase subfamily. Homodimer or homotetramer. Heme b serves as cofactor. In terms of processing, formation of the three residue Trp-Tyr-Met cross-link is important for the catalase, but not the peroxidase activity of the enzyme.

It carries out the reaction H2O2 + AH2 = A + 2 H2O. It catalyses the reaction 2 H2O2 = O2 + 2 H2O. Bifunctional enzyme with both catalase and broad-spectrum peroxidase activity. This Saccharopolyspora erythraea (strain ATCC 11635 / DSM 40517 / JCM 4748 / NBRC 13426 / NCIMB 8594 / NRRL 2338) protein is Catalase-peroxidase.